The following is a 197-amino-acid chain: Small ribosomal subunit protein uS4B (197 aa).

In terms of domain architecture, S4 RNA-binding spans 88–150 (SRLDNMVYRM…SRKTEMFVNN (63 aa)).

The protein belongs to the universal ribosomal protein uS4 family. Part of the 30S ribosomal subunit. Contacts protein S5. The interaction surface between S4 and S5 is involved in control of translational fidelity.

One of the primary rRNA binding proteins, it binds directly to 16S rRNA where it nucleates assembly of the body of the 30S subunit. In terms of biological role, with S5 and S12 plays an important role in translational accuracy. The sequence is that of Small ribosomal subunit protein uS4B (rpsD2) from Clostridium perfringens (strain 13 / Type A).